We begin with the raw amino-acid sequence, 301 residues long: Acetyl-coenzyme A carboxylase carboxyl transferase subunit beta (301 aa).

In terms of domain architecture, CoA carboxyltransferase N-terminal spans 25-294 (LWIKDPSTGE…NSDAPAPQKP (270 aa)).

Belongs to the AccD/PCCB family. Acetyl-CoA carboxylase is a heterohexamer composed of biotin carboxyl carrier protein (AccB), biotin carboxylase (AccC) and two subunits each of ACCase subunit alpha (AccA) and ACCase subunit beta (AccD).

The protein localises to the cytoplasm. It carries out the reaction N(6)-carboxybiotinyl-L-lysyl-[protein] + acetyl-CoA = N(6)-biotinyl-L-lysyl-[protein] + malonyl-CoA. It functions in the pathway lipid metabolism; malonyl-CoA biosynthesis; malonyl-CoA from acetyl-CoA: step 1/1. Its function is as follows. Component of the acetyl coenzyme A carboxylase (ACC) complex. Biotin carboxylase (BC) catalyzes the carboxylation of biotin on its carrier protein (BCCP) and then the CO(2) group is transferred by the transcarboxylase to acetyl-CoA to form malonyl-CoA. The sequence is that of Acetyl-coenzyme A carboxylase carboxyl transferase subunit beta from Brucella abortus (strain 2308).